Reading from the N-terminus, the 215-residue chain is Cytochrome b6 (215 aa).

The chain crosses the membrane as a helical span at residues 32-52 (IFYCIGGIVFTSFLIQVASGF). Cysteine 35 serves as a coordination point for heme c. Residues histidine 86 and histidine 100 each coordinate heme b. A run of 3 helical transmembrane segments spans residues 90-110 (ASMM…TGGF), 116-136 (LTWV…VTGY), and 186-206 (LHTF…FLMI). Positions 187 and 202 each coordinate heme b.

The protein belongs to the cytochrome b family. PetB subfamily. As to quaternary structure, the 4 large subunits of the cytochrome b6-f complex are cytochrome b6, subunit IV (17 kDa polypeptide, PetD), cytochrome f and the Rieske protein, while the 4 small subunits are PetG, PetL, PetM and PetN. The complex functions as a dimer. Heme b is required as a cofactor. It depends on heme c as a cofactor.

The protein resides in the plastid. It is found in the chloroplast thylakoid membrane. Its function is as follows. Component of the cytochrome b6-f complex, which mediates electron transfer between photosystem II (PSII) and photosystem I (PSI), cyclic electron flow around PSI, and state transitions. The polypeptide is Cytochrome b6 (Gracilaria tenuistipitata var. liui (Red alga)).